We begin with the raw amino-acid sequence, 943 residues long: Neutral alpha-glucosidase AB (943 aa).

Residues 1–23 (MRKLVILIILSIVCSLFIGSIES) form the signal peptide. Residues 186–231 (FEPISDKPQPLPPKEKKSEEENKEANQEEDNNNNNNDNNEEQQVST) form a disordered region. Over residues 198–211 (PKEKKSEEENKEAN) the composition is skewed to basic and acidic residues. Residue D540 is the Nucleophile of the active site. E543 is an active-site residue. D617 (proton donor) is an active-site residue. 3 N-linked (GlcNAc...) asparagine glycosylation sites follow: N878, N887, and N907.

The protein belongs to the glycosyl hydrolase 31 family.

It localises to the endoplasmic reticulum. The protein localises to the golgi apparatus. It carries out the reaction N(4)-(alpha-D-Glc-(1-&gt;3)-alpha-D-Man-(1-&gt;2)-alpha-D-Man-(1-&gt;2)-alpha-D-Man-(1-&gt;3)-[alpha-D-Man-(1-&gt;2)-alpha-D-Man-(1-&gt;3)-[alpha-D-Man-(1-&gt;2)-alpha-D-Man-(1-&gt;6)]-alpha-D-Man-(1-&gt;6)]-beta-D-Man-(1-&gt;4)-beta-D-GlcNAc-(1-&gt;4)-beta-D-GlcNAc)-L-asparaginyl-[protein] + H2O = N(4)-(alpha-D-Man-(1-&gt;2)-alpha-D-Man-(1-&gt;2)-alpha-D-Man-(1-&gt;3)-[alpha-D-Man-(1-&gt;2)-alpha-D-Man-(1-&gt;3)-[alpha-D-Man-(1-&gt;2)-alpha-D-Man-(1-&gt;6)]-alpha-D-Man-(1-&gt;6)]-beta-D-Man-(1-&gt;4)-beta-D-GlcNAc-(1-&gt;4)-beta-D-GlcNAc)-L-asparaginyl-[protein] (N-glucan mannose isomer 9A1,2,3B1,2,3) + beta-D-glucose. The enzyme catalyses N(4)-(alpha-D-Glc-(1-&gt;3)-alpha-D-Glc-(1-&gt;3)-alpha-D-Man-(1-&gt;2)-alpha-D-Man-(1-&gt;2)-alpha-D-Man-(1-&gt;3)-[alpha-D-Man-(1-&gt;2)-alpha-D-Man-(1-&gt;3)-[alpha-D-Man-(1-&gt;2)-alpha-D-Man-(1-&gt;6)]-alpha-D-Man-(1-&gt;6)]-beta-D-Man-(1-&gt;4)-beta-D-GlcNAc-(1-&gt;4)-beta-D-GlcNAc)-L-asparaginyl-[protein] + H2O = N(4)-(alpha-D-Glc-(1-&gt;3)-alpha-D-Man-(1-&gt;2)-alpha-D-Man-(1-&gt;2)-alpha-D-Man-(1-&gt;3)-[alpha-D-Man-(1-&gt;2)-alpha-D-Man-(1-&gt;3)-[alpha-D-Man-(1-&gt;2)-alpha-D-Man-(1-&gt;6)]-alpha-D-Man-(1-&gt;6)]-beta-D-Man-(1-&gt;4)-beta-D-GlcNAc-(1-&gt;4)-beta-D-GlcNAc)-L-asparaginyl-[protein] + beta-D-glucose. Its pathway is glycan metabolism; N-glycan metabolism. Functionally, cleaves sequentially the 2 innermost alpha-1,3-linked glucose residues from N-linked oligosaccharides on newly synthesized glycoproteins. This is Neutral alpha-glucosidase AB (modA) from Dictyostelium discoideum (Social amoeba).